The chain runs to 427 residues: Carboxyl-terminal-processing protease (427 aa).

The N-terminal stretch at 1-31 (MGKRTRRFWALAFSLLMGALIYLGNTPSALA) is a signal peptide. The region spanning 104-186 (NLQVTTTGEL…TKVSLEILSA (83 aa)) is the PDZ domain. Active-site charge relay system residues include serine 313, aspartate 324, and lysine 338.

It belongs to the peptidase S41A family.

It is found in the cellular thylakoid lumen. The enzyme catalyses The enzyme shows specific recognition of a C-terminal tripeptide, Xaa-Yaa-Zaa, in which Xaa is preferably Ala or Leu, Yaa is preferably Ala or Tyr, and Zaa is preferably Ala, but then cleaves at a variable distance from the C-terminus. A typical cleavage is -Ala-Ala-|-Arg-Ala-Ala-Lys-Glu-Asn-Tyr-Ala-Leu-Ala-Ala.. Functionally, cleavage of the 16 C-terminal residues from the D1 precursor of photosystem II (PSII). This proteolytic processing is necessary to allow the light-driven assembly of the oxygen-evolving cluster (a tetranuclear manganese), which is responsible for photosynthetic water oxidation. The protein is Carboxyl-terminal-processing protease (ctpA) of Synechocystis sp. (strain ATCC 27184 / PCC 6803 / Kazusa).